A 1087-amino-acid polypeptide reads, in one-letter code: Exportin-7-A (1087 aa).

The 67-residue stretch at 30–96 folds into the Importin N-terminal domain; it reads AEKALVEFTN…RNYVLTYLAT (67 aa).

It belongs to the exportin family. Expressed in oocytes (at protein level).

It localises to the cytoplasm. It is found in the nucleus. Mediates the nuclear export of proteins (cargos) with broad substrate specificity. This Xenopus laevis (African clawed frog) protein is Exportin-7-A (xpo7-a).